We begin with the raw amino-acid sequence, 57 residues long: Large ribosomal subunit protein bL32 (57 aa).

Belongs to the bacterial ribosomal protein bL32 family.

The protein is Large ribosomal subunit protein bL32 of Staphylococcus aureus (strain MSSA476).